Consider the following 306-residue polypeptide: Shugoshin (306 aa).

Residues 28-75 are a coiled coil; it reads NFKSTNESLIKKNLQLKQQLSQCTKALEKLRNENIALREQNQELIDAT. Disordered regions lie at residues 122–196 and 223–306; these read PEPS…GRRS and IAPS…DTFF. Basic and acidic residues predominate over residues 133–161; sequence PKMECNLEKLDESPVRNFPRSDYEEENKS. The segment covering 167–181 has biased composition (polar residues); sequence NGPSSSSSMTQNLEN. Pro residues predominate over residues 230 to 241; the sequence is GGPPKKAPPRKA.

Belongs to the shugoshin family.

The protein resides in the nucleus. Its subcellular location is the chromosome. It localises to the centromere. In terms of biological role, plays a central role in chromosome cohesion during cell division by preventing premature dissociation of cohesin complex from centromeres after prophase, when most of cohesin complex dissociates from chromosomes arms. This Caenorhabditis briggsae protein is Shugoshin (sgo-1).